A 382-amino-acid polypeptide reads, in one-letter code: Non-structural maintenance of chromosomes element 4 homolog A (382 aa).

Residues 1–21 (MSGDSSGRRPEGRGRGRDPHR) show a composition bias toward basic and acidic residues. The tract at residues 1 to 80 (MSGDSSGRRP…ASLEEETDPS (80 aa)) is disordered. A compositionally biased stretch (low complexity) spans 31–41 (RSPLSPGSRRG). Residues 42–55 (AAPERREAPERPGL) show a composition bias toward basic and acidic residues. Positions 56 to 78 (EDTEPSDSGDEMIDPASLEEETD) are enriched in acidic residues. Thr342 bears the Phosphothreonine mark. Position 374 is a phosphoserine (Ser374).

Belongs to the NSE4 family. As to quaternary structure, component of the SMC5-SMC6 complex which consists at least of SMC5, SMC6, NSMCE2, NSMCE1, NSMCE4A or EID3 and NSMCE3. NSMCE1, NSMCE4A or EID3 and NSMCE3 probably form a subcomplex that bridges the head domains of the SMC5:SMC6 heterodimer. Interacts with NSMCE3.

The protein localises to the nucleus. The protein resides in the chromosome. It is found in the telomere. Functionally, component of the SMC5-SMC6 complex, a complex involved in repair of DNA double-strand breaks by homologous recombination. The complex may promote sister chromatid homologous recombination by recruiting the SMC1-SMC3 cohesin complex to double-strand breaks. The complex is required for telomere maintenance via recombination and mediates sumoylation of shelterin complex (telosome) components. In Bos taurus (Bovine), this protein is Non-structural maintenance of chromosomes element 4 homolog A (NSMCE4A).